The chain runs to 571 residues: MTRRMDRRQYAQVYGPTTGDRVRLGDTALVLEVDRDLTVYGDECVFGGGKVLRDGMGQAAGAPPEEVLDLVITNALVLDQGGVTKADVGIRGGRIAALGKAGNPDAMAGVTPGMTIGPGTECIAGEGLILTAGGVDSHIHFISPQQAYEAIASGVTTMLGGGTGPATGTNATTCTPGARHVALLLQATDALPVNIGLLGKGNAASPEGLAEQVRAGAVGLKLHEDWGTTPAAIDTCLRVADQLDVQVAIHTDTLNESGCAEHSIAAFAGRTIHTFHTEGAGGGHAPDIIRVCGEPNVLPSSTNPTRPFTVNTVDEHLDMLVVCHHLDPSLPEDLAFAESRIRRETIAAEDVLHDLGAISMMSSDSQAMGRVGEVVTRTWQTADKMRRQRGRLPEERGDNDNLRIRRYLAKYTINPAVAHGLSHEVGSVEPGKLADLVLWRPALFGAKPELVLKGGLIAWAQMGDANASIPTPQPVVARPMFGALGRAVGATSVAFVSRASLEGGAVQGYGLAKRLVAVHGCRGLGKKDMRLNDALPRMEVDPETYEVRADGVLLRCEPAARLPLAQRYFLF.

Residues 133–571 (GGVDSHIHFI…LPLAQRYFLF (439 aa)) form the Urease domain. Ni(2+) is bound by residues histidine 138, histidine 140, and lysine 221. Position 221 is an N6-carboxylysine (lysine 221). Histidine 223 lines the substrate pocket. Residues histidine 250 and histidine 276 each contribute to the Ni(2+) site. The active-site Proton donor is the histidine 324. A Ni(2+)-binding site is contributed by aspartate 364.

This sequence belongs to the metallo-dependent hydrolases superfamily. Urease alpha subunit family. Heterotrimer of UreA (gamma), UreB (beta) and UreC (alpha) subunits. Three heterotrimers associate to form the active enzyme. Requires Ni cation as cofactor. Post-translationally, carboxylation allows a single lysine to coordinate two nickel ions.

The protein resides in the cytoplasm. The catalysed reaction is urea + 2 H2O + H(+) = hydrogencarbonate + 2 NH4(+). It participates in nitrogen metabolism; urea degradation; CO(2) and NH(3) from urea (urease route): step 1/1. In Anaeromyxobacter sp. (strain Fw109-5), this protein is Urease subunit alpha.